A 266-amino-acid polypeptide reads, in one-letter code: Thiazole synthase (266 aa).

Lys-106 acts as the Schiff-base intermediate with DXP in catalysis. Residues Gly-167, Ala-193 to Gly-194, and Asn-215 to Thr-216 each bind 1-deoxy-D-xylulose 5-phosphate.

The protein belongs to the ThiG family. Homotetramer. Forms heterodimers with either ThiH or ThiS.

It localises to the plastid. The protein localises to the chloroplast. The enzyme catalyses [ThiS sulfur-carrier protein]-C-terminal-Gly-aminoethanethioate + 2-iminoacetate + 1-deoxy-D-xylulose 5-phosphate = [ThiS sulfur-carrier protein]-C-terminal Gly-Gly + 2-[(2R,5Z)-2-carboxy-4-methylthiazol-5(2H)-ylidene]ethyl phosphate + 2 H2O + H(+). It participates in cofactor biosynthesis; thiamine diphosphate biosynthesis. Its function is as follows. Catalyzes the rearrangement of 1-deoxy-D-xylulose 5-phosphate (DXP) to produce the thiazole phosphate moiety of thiamine. Sulfur is provided by the thiocarboxylate moiety of the carrier protein ThiS. In vitro, sulfur can be provided by H(2)S. The polypeptide is Thiazole synthase (Cyanidium caldarium (Red alga)).